Consider the following 226-residue polypeptide: Chalcone--flavanone isomerase 1 (226 aa).

The substrate site is built by T52, N117, and T194.

It belongs to the chalcone isomerase family.

The enzyme catalyses a chalcone = a flavanone.. It functions in the pathway secondary metabolite biosynthesis; flavonoid biosynthesis. Catalyzes the intramolecular cyclization of bicyclic chalcones into tricyclic (S)-flavanones. Responsible for the isomerization of 4,2',4',6'-tetrahydroxychalcone (also termed chalcone) into naringenin. This Lotus japonicus (Lotus corniculatus var. japonicus) protein is Chalcone--flavanone isomerase 1 (CHI1).